The following is a 142-amino-acid chain: Large-conductance mechanosensitive channel (142 aa).

Transmembrane regions (helical) follow at residues 14 to 34 and 82 to 102; these read VMDL…VDSV and GNFI…FLLI.

Belongs to the MscL family. Homopentamer.

It localises to the cell inner membrane. Its function is as follows. Channel that opens in response to stretch forces in the membrane lipid bilayer. May participate in the regulation of osmotic pressure changes within the cell. This chain is Large-conductance mechanosensitive channel, found in Sinorhizobium medicae (strain WSM419) (Ensifer medicae).